We begin with the raw amino-acid sequence, 137 residues long: Integration host factor subunit beta (137 aa).

The segment covering 75–92 has biased composition (basic and acidic residues); it reads KRVPHFKAGKELRERVDR. A disordered region spans residues 75–137; the sequence is KRVPHFKAGK…EGGGLNLARS (63 aa). A compositionally biased stretch (gly residues) spans 128-137; that stretch reads EGGGLNLARS.

It belongs to the bacterial histone-like protein family. As to quaternary structure, heterodimer of an alpha and a beta chain.

Functionally, this protein is one of the two subunits of integration host factor, a specific DNA-binding protein that functions in genetic recombination as well as in transcriptional and translational control. The polypeptide is Integration host factor subunit beta (Cupriavidus pinatubonensis (strain JMP 134 / LMG 1197) (Cupriavidus necator (strain JMP 134))).